The primary structure comprises 1543 residues: Rho guanine nucleotide exchange factor 12 (1543 aa).

The segment at 1–62 is disordered; the sequence is MSGTQSTITD…KTKSSSEESR (62 aa). At serine 2 the chain carries N-acetylserine. Residues 28–45 show a composition bias toward basic and acidic residues; it reads SPTDKKQKVERSSSHDFD. Serine 41 is modified (phosphoserine). The PDZ domain maps to 72-151; that stretch reads CVIIQKDDNG…LTVQGRPPGS (80 aa). Residues 194-262 are a coiled coil; it reads VGEENNVVHN…LSKATGSAQD (69 aa). Residues 281 to 355 form a disordered region; that stretch reads AEADPGDGLC…GAPHIIGAED (75 aa). Residues 293–312 show a composition bias toward low complexity; it reads DWSSGDASRPSSDSADSPKS. At serine 309 the chain carries Phosphoserine. The span at 313–329 shows a compositional bias: basic and acidic residues; it reads SLRERSYLEEAPERSEG. The residue at position 341 (serine 341) is a Phosphoserine. The RGSL domain occupies 367–558; that stretch reads GQCSCFQSIE…LMYMKYLGVK (192 aa). Residues 574 to 710 form a disordered region; it reads FLPKIKQSMK…DSTPRVPTTV (137 aa). The span at 582–592 shows a compositional bias: basic and acidic residues; it reads MKKDREGEEKG. Residue serine 637 is modified to Phosphoserine. Residues 663-676 are compositionally biased toward low complexity; that stretch reads ASSMSSATSGTALS. Residue threonine 736 is modified to Phosphothreonine. One can recognise a DH domain in the interval 787–977; that stretch reads KRQEVINELF…RQILNYVNQA (191 aa). A coiled-coil region spans residues 981-1004; it reads AENKQRLEDYQRRLDTSNLKLSEY. Residues 1019–1132 form the PH domain; sequence KMIHEGPLVW…WQDLICRMAA (114 aa). The disordered stretch occupies residues 1137–1158; sequence QSTKPIPLPQPPPCEGDNDEEE. 3 positions are modified to phosphoserine: serine 1288, serine 1327, and serine 1377. 2 disordered regions span residues 1386 to 1405 and 1441 to 1468; these read EAHS…KEEK and PVTG…GPVS. Over residues 1450–1460 the composition is skewed to polar residues; the sequence is SSHQQQHSPQN. A phosphoserine mark is found at serine 1457 and serine 1540.

Interacts with GNA12 and GNA13, probably through the RGS-like domain, with RHOA, PLXNB1 and PLXNB2, and through its PDZ domain with IGF1R beta subunit. Interacts with GCSAM. Found in a complex with ARHGEF11 and ARHGEF12; binding to ARHGEF11 and ARHGEF12 enhances CDC42 GEF activity of PLEKHG4B, and PLEKHG4B, in turn, inhibits ARHGEF11- and ARHGEF12-mediated RHOA activation. As to expression, expressed in brain, predominantly in neuronal cell bodies.

Its subcellular location is the cytoplasm. The protein localises to the membrane. In terms of biological role, may play a role in the regulation of RhoA GTPase by guanine nucleotide-binding alpha-12 (GNA12) and alpha-13 (GNA13). Acts as guanine nucleotide exchange factor (GEF) for RhoA GTPase and may act as GTPase-activating protein (GAP) for GNA12 and GNA13. This chain is Rho guanine nucleotide exchange factor 12 (Arhgef12), found in Mus musculus (Mouse).